The sequence spans 275 residues: 2'-N-acetylparomamine deacetylase (275 aa).

His14, Asp17, and His166 together coordinate Zn(2+).

The protein belongs to the PIGL family. Zn(2+) is required as a cofactor.

It carries out the reaction 2'-N-acetylparomamine + H2O = paromamine + acetate. It participates in antibiotic biosynthesis; butirosin biosynthesis. Its function is as follows. Deacetylase involved in the biosynthesis of butirosin by mediating deacetylation of 2'-N-acetylparomamine. This chain is 2'-N-acetylparomamine deacetylase (btrD), found in Niallia circulans (Bacillus circulans).